Consider the following 206-residue polypeptide: Large ribosomal subunit protein uL4 (206 aa).

The disordered stretch occupies residues 48–97; the sequence is THAVKNRSLVSGGGKKPWKQKHTGRARQGSTRASQWVGGGKAMGPKPRDY. The segment covering 63 to 72 has biased composition (basic residues); it reads KPWKQKHTGR.

The protein belongs to the universal ribosomal protein uL4 family. In terms of assembly, part of the 50S ribosomal subunit.

One of the primary rRNA binding proteins, this protein initially binds near the 5'-end of the 23S rRNA. It is important during the early stages of 50S assembly. It makes multiple contacts with different domains of the 23S rRNA in the assembled 50S subunit and ribosome. Functionally, forms part of the polypeptide exit tunnel. The polypeptide is Large ribosomal subunit protein uL4 (Anaeromyxobacter sp. (strain K)).